Reading from the N-terminus, the 732-residue chain is uncharacterized protein (732 aa).

One can recognise a TR mART core domain in the interval Y163 to E390. Catalysis depends on residues R285, S309, and E354.

This is an uncharacterized protein from Acanthamoeba polyphaga mimivirus (APMV).